A 393-amino-acid polypeptide reads, in one-letter code: Acetate kinase (393 aa).

Asn7 lines the Mg(2+) pocket. Lys14 is a binding site for ATP. A substrate-binding site is contributed by Arg89. Catalysis depends on Asp146, which acts as the Proton donor/acceptor. ATP contacts are provided by residues 204–208 (HIGNG), 279–281 (DSR), and 327–331 (GIGEN). Glu379 is a Mg(2+) binding site.

Belongs to the acetokinase family. Homodimer. The cofactor is Mg(2+). It depends on Mn(2+) as a cofactor.

Its subcellular location is the cytoplasm. It carries out the reaction acetate + ATP = acetyl phosphate + ADP. The protein operates within metabolic intermediate biosynthesis; acetyl-CoA biosynthesis; acetyl-CoA from acetate: step 1/2. Functionally, catalyzes the formation of acetyl phosphate from acetate and ATP. Can also catalyze the reverse reaction. This is Acetate kinase from Acholeplasma laidlawii (strain PG-8A).